Here is a 294-residue protein sequence, read N- to C-terminus: NAD kinase (294 aa).

The active-site Proton acceptor is Asp-74. Residues 74–75, Arg-79, 149–150, Asp-179, 190–195, and Ala-214 each bind NAD(+); these read DG, NE, and TGYSLS.

This sequence belongs to the NAD kinase family. Requires a divalent metal cation as cofactor.

The protein localises to the cytoplasm. It catalyses the reaction NAD(+) + ATP = ADP + NADP(+) + H(+). In terms of biological role, involved in the regulation of the intracellular balance of NAD and NADP, and is a key enzyme in the biosynthesis of NADP. Catalyzes specifically the phosphorylation on 2'-hydroxyl of the adenosine moiety of NAD to yield NADP. The chain is NAD kinase from Flavobacterium johnsoniae (strain ATCC 17061 / DSM 2064 / JCM 8514 / BCRC 14874 / CCUG 350202 / NBRC 14942 / NCIMB 11054 / UW101) (Cytophaga johnsonae).